The chain runs to 225 residues: UPF0758 protein NMC1174 (225 aa).

An MPN domain is found at 102–224; sequence VLSDPDTVAD…VRSFRQLGLM (123 aa). 3 residues coordinate Zn(2+): His-173, His-175, and Asp-186. Residues 173-186 carry the JAMM motif motif; it reads HNHPGGSPEPSQED.

This sequence belongs to the UPF0758 family.

This Neisseria meningitidis serogroup C / serotype 2a (strain ATCC 700532 / DSM 15464 / FAM18) protein is UPF0758 protein NMC1174.